Consider the following 508-residue polypeptide: 3-octaprenyl-4-hydroxybenzoate carboxy-lyase (508 aa).

N172 serves as a coordination point for Mn(2+). Residues 175–177, 189–191, and 194–195 each bind prenylated FMN; these read IYR, RWL, and RG. E238 lines the Mn(2+) pocket. D287 serves as the catalytic Proton donor. A disordered region spans residues 483–508; the sequence is GEYGIATPPPPPRHSPPSDERGHDDV. Over residues 498–508 the composition is skewed to basic and acidic residues; the sequence is PPSDERGHDDV.

It belongs to the UbiD family. Homohexamer. It depends on prenylated FMN as a cofactor. Mn(2+) serves as cofactor.

Its subcellular location is the cell membrane. It carries out the reaction a 4-hydroxy-3-(all-trans-polyprenyl)benzoate + H(+) = a 2-(all-trans-polyprenyl)phenol + CO2. It participates in cofactor biosynthesis; ubiquinone biosynthesis. Its function is as follows. Catalyzes the decarboxylation of 3-octaprenyl-4-hydroxy benzoate to 2-octaprenylphenol, an intermediate step in ubiquinone biosynthesis. This Chromohalobacter salexigens (strain ATCC BAA-138 / DSM 3043 / CIP 106854 / NCIMB 13768 / 1H11) protein is 3-octaprenyl-4-hydroxybenzoate carboxy-lyase.